Reading from the N-terminus, the 438-residue chain is tRNA(Ile)-lysidine synthase (438 aa).

19-24 (SGGIDS) contributes to the ATP binding site.

It belongs to the tRNA(Ile)-lysidine synthase family.

It is found in the cytoplasm. It carries out the reaction cytidine(34) in tRNA(Ile2) + L-lysine + ATP = lysidine(34) in tRNA(Ile2) + AMP + diphosphate + H(+). In terms of biological role, ligates lysine onto the cytidine present at position 34 of the AUA codon-specific tRNA(Ile) that contains the anticodon CAU, in an ATP-dependent manner. Cytidine is converted to lysidine, thus changing the amino acid specificity of the tRNA from methionine to isoleucine. The protein is tRNA(Ile)-lysidine synthase of Buchnera aphidicola subsp. Baizongia pistaciae (strain Bp).